We begin with the raw amino-acid sequence, 338 residues long: tRNA N6-adenosine threonylcarbamoyltransferase (338 aa).

2 residues coordinate Fe cation: H111 and H115. Substrate is bound by residues 134-138 (LVSGG), D167, G180, and N272. D300 is a Fe cation binding site.

This sequence belongs to the KAE1 / TsaD family. Requires Fe(2+) as cofactor.

It is found in the cytoplasm. The enzyme catalyses L-threonylcarbamoyladenylate + adenosine(37) in tRNA = N(6)-L-threonylcarbamoyladenosine(37) in tRNA + AMP + H(+). Functionally, required for the formation of a threonylcarbamoyl group on adenosine at position 37 (t(6)A37) in tRNAs that read codons beginning with adenine. Is involved in the transfer of the threonylcarbamoyl moiety of threonylcarbamoyl-AMP (TC-AMP) to the N6 group of A37, together with TsaE and TsaB. TsaD likely plays a direct catalytic role in this reaction. This is tRNA N6-adenosine threonylcarbamoyltransferase from Shewanella denitrificans (strain OS217 / ATCC BAA-1090 / DSM 15013).